The chain runs to 512 residues: Maturase K (512 aa).

Belongs to the intron maturase 2 family. MatK subfamily.

Its subcellular location is the plastid. The protein resides in the chloroplast. Usually encoded in the trnK tRNA gene intron. Probably assists in splicing its own and other chloroplast group II introns. This Lilium tsingtauense (Twilight lily) protein is Maturase K.